The sequence spans 417 residues: Serine hydroxymethyltransferase (417 aa).

(6S)-5,6,7,8-tetrahydrofolate is bound by residues L112 and 116-118; that span reads GHL. K221 bears the N6-(pyridoxal phosphate)lysine mark. Position 247 (E247) interacts with (6S)-5,6,7,8-tetrahydrofolate.

This sequence belongs to the SHMT family. Homodimer. Requires pyridoxal 5'-phosphate as cofactor.

It localises to the cytoplasm. The catalysed reaction is (6R)-5,10-methylene-5,6,7,8-tetrahydrofolate + glycine + H2O = (6S)-5,6,7,8-tetrahydrofolate + L-serine. Its pathway is one-carbon metabolism; tetrahydrofolate interconversion. It functions in the pathway amino-acid biosynthesis; glycine biosynthesis; glycine from L-serine: step 1/1. Catalyzes the reversible interconversion of serine and glycine with tetrahydrofolate (THF) serving as the one-carbon carrier. This reaction serves as the major source of one-carbon groups required for the biosynthesis of purines, thymidylate, methionine, and other important biomolecules. Also exhibits THF-independent aldolase activity toward beta-hydroxyamino acids, producing glycine and aldehydes, via a retro-aldol mechanism. This chain is Serine hydroxymethyltransferase, found in Borrelia duttonii (strain Ly).